We begin with the raw amino-acid sequence, 865 residues long: MGSIYRSEHMKLCQIFFQSESAYQCVAELGELGMAQFIDLNEEQNAYTRKFVNEVRRCDEMERKINFVEDEITKDLVPIPDYDEHIPAPQPKHMGEMEANLEKLEEELVQINKNCKVLKNNHVQLLEMKAVLEHVTSLLDPHSKREAAMSISEAARGEAGPISFGMKDEFDKPVKDEKELKFVTGVVKRSKAIAFERFLWRLSRAKVFAKFIQIQEQTELFSNEFEDKCVFILFFSGEQLRAKVKKICDGFQAKCYTVPENPAERTKLLLNIKVQTTDMKAVIEKTLDYRSKCIHAAATNLRKWGIMLLKLKSIFHTLNMFSVDVTQKCLIAECWVPEADIGQVKNSLHMGTIHSGSTVPAILNEMETDKYPPTYFKLNKFTQGFQNIVDAYGIANYREVNPAPWTIISFPFLFAVMFGDAGHGIIMLIAASAFVIFEKKLISMKIKDEIFNTFFGGRYVVLLMGMFAIYTGFIYNDFYSKSVNIFGSSWVNPYNQTLLANMDAQGADSNTDLSLTFPPEIAFNHDYGPYPFGVDPVWNLAINRLNFLNPMKMKTSILLGISQMAFGIMLSLMNHIGNRSVVDIVFVFIPQCLFLGCIFVYLCLQVLMKWIFFYVKPAYIFGRLYPGSNCAPSLLIGLINMFMVKSRDASFAHDVGTAAGKEWVIVNGQNVTYTINDQCYLQQWYPNQSLVELILLLIAVVSVPVMLLVKPFYIRWRHSRGLHIDLGHGPDEHGEFNFGDIMVHQAIHTIEFVLGCVSHTASYLRLWALSLAHAQLSDVLWTMVLRMSLTMGGWGGSAAITILFYFIFSILSVCILILMEGLSAFLHAIRLHWVEFQSKFYGGTGIQFEPFCFTKIIRVYEGLDQ.

The Cytoplasmic segment spans residues methionine 1 to serine 409. Positions phenylalanine 51 to asparagine 121 form a coiled coil. Residues phenylalanine 410–alanine 430 traverse the membrane as a helical segment. At alanine 431 to threonine 453 the chain is on the extracellular side. A helical transmembrane segment spans residues phenylalanine 454–isoleucine 474. Over tyrosine 475–serine 556 the chain is Cytoplasmic. A helical membrane pass occupies residues isoleucine 557–glycine 577. Asparagine 578 carries N-linked (GlcNAc...) asparagine glycosylation. Residues asparagine 578 to aspartate 583 lie on the Extracellular side of the membrane. Residues isoleucine 584 to leucine 604 form a helical membrane-spanning segment. The Cytoplasmic portion of the chain corresponds to glutamine 605–arginine 623. Residues leucine 624 to valine 644 traverse the membrane as a helical segment. The Extracellular segment spans residues lysine 645 to glutamine 688. N-linked (GlcNAc...) asparagine glycosylation is found at asparagine 670 and asparagine 687. A helical membrane pass occupies residues serine 689–valine 709. The Cytoplasmic portion of the chain corresponds to lysine 710–alanine 798. Residues alanine 799–methionine 819 form a helical membrane-spanning segment. Residues glutamate 820–glutamine 865 lie on the Extracellular side of the membrane.

It belongs to the V-ATPase 116 kDa subunit family. In terms of assembly, V-ATPase is a heteromultimeric enzyme made up of two complexes: the ATP-hydrolytic V1 complex and the proton translocation V0 complex. The V1 complex consists of three catalytic AB heterodimers that form a heterohexamer, three peripheral stalks each consisting of EG heterodimers, one central rotor including subunits D and F, and the regulatory subunits C and H. The proton translocation complex V0 consists of the proton transport subunit a, a ring of proteolipid subunits c9c'', rotary subunit d, subunits e and f, and the accessory subunits vah-19/Ac45 and vah-20/PRR. Interacts with V-type proton ATPase subunit C vha-11.

The protein resides in the apical cell membrane. Functionally, subunit of the V0 complex of vacuolar(H+)-ATPase (V-ATPase), a multisubunit enzyme composed of a peripheral complex (V1) that hydrolyzes ATP and a membrane integral complex (V0) that translocates protons. V-ATPase is responsible for acidifying and maintaining the pH of intracellular compartments and in some cell types, is targeted to the plasma membrane, where it is responsible for acidifying the extracellular environment. In the intestine, required for the rhythmic defecation behavior by promoting acidification in the gut lumen following defecation. Also, luminal acidification is required for nutrient uptake. The sequence is that of V-type proton ATPase 116 kDa subunit a 3 from Caenorhabditis elegans.